A 319-amino-acid chain; its full sequence is Lambda-crystallin (319 aa).

Alanine 2 carries the N-acetylalanine modification. Serine 3 carries the phosphoserine modification. NAD(+)-binding positions include 16–17 (LV), aspartate 36, glutamate 97, and lysine 102. The residue at position 111 (serine 111) is a Phosphoserine.

This sequence belongs to the 3-hydroxyacyl-CoA dehydrogenase family. In terms of assembly, homodimer. As to expression, detected in eye lens, kidney, liver, heart, lung, brain and testis.

It localises to the cytoplasm. The catalysed reaction is L-gulonate + NAD(+) = 3-dehydro-L-gulonate + NADH + H(+). Its activity is regulated as follows. Inhibited by malonate and by inorganic phosphate. Its function is as follows. Functions as a crystallin in the rabbit eye lens. Has high L-gulonate 3-dehydrogenase activity. It also exhibits low dehydrogenase activity toward L-3-hydroxybutyrate (HBA) and L-threonate. The sequence is that of Lambda-crystallin (CRYL1) from Oryctolagus cuniculus (Rabbit).